A 105-amino-acid polypeptide reads, in one-letter code: Large ribosomal subunit protein uL24 (105 aa).

This sequence belongs to the universal ribosomal protein uL24 family. As to quaternary structure, part of the 50S ribosomal subunit.

Its function is as follows. One of two assembly initiator proteins, it binds directly to the 5'-end of the 23S rRNA, where it nucleates assembly of the 50S subunit. Functionally, one of the proteins that surrounds the polypeptide exit tunnel on the outside of the subunit. This chain is Large ribosomal subunit protein uL24, found in Rhizorhabdus wittichii (strain DSM 6014 / CCUG 31198 / JCM 15750 / NBRC 105917 / EY 4224 / RW1) (Sphingomonas wittichii).